The sequence spans 190 residues: CASP-like protein 1E2 (190 aa).

A compositionally biased stretch (low complexity) spans 1-12 (MENEGKNNMNGM). Residues 1-24 (MENEGKNNMNGMEMEKGKRESRSR) are disordered. At 1–28 (MENEGKNNMNGMEMEKGKRESRSRKGVE) the chain is on the cytoplasmic side. A compositionally biased stretch (basic and acidic residues) spans 13-24 (EMEKGKRESRSR). Residues 29–49 (LTMRVLALVLTMAAATVLGVA) traverse the membrane as a helical segment. At 50–83 (KQTKVVSIKLIPALPPLDITTTAKASYLSAFVYN) the chain is on the extracellular side. The helical transmembrane segment at 84–104 (ISANAIACGYTAISIAILMIS) threads the bilayer. Topologically, residues 105–111 (RGRRSKK) are cytoplasmic. The chain crosses the membrane as a helical span at residues 112–132 (LLMAVLLGDLVMVALLFSGTG). The Extracellular segment spans residues 133 to 163 (AASAIGLMGLQGNKHVMWNKVCGVFGKFCHR). A helical transmembrane segment spans residues 164-184 (AAPSLPLTFLAAVVFMFLVVL). At 185-190 (DAIKLP) the chain is on the cytoplasmic side.

The protein belongs to the Casparian strip membrane proteins (CASP) family. In terms of assembly, homodimer and heterodimers.

Its subcellular location is the cell membrane. The polypeptide is CASP-like protein 1E2 (Arabidopsis lyrata subsp. lyrata (Lyre-leaved rock-cress)).